Reading from the N-terminus, the 336-residue chain is Glycerol-3-phosphate dehydrogenase [NAD(P)+] (336 aa).

Residues W11, R33, and K105 each coordinate NADPH. Residues K105, G141, and S143 each contribute to the sn-glycerol 3-phosphate site. A145 is an NADPH binding site. Residues K196, D249, S259, R260, and N261 each coordinate sn-glycerol 3-phosphate. The Proton acceptor role is filled by K196. An NADPH-binding site is contributed by R260. NADPH is bound by residues V284 and E286.

The protein belongs to the NAD-dependent glycerol-3-phosphate dehydrogenase family.

It localises to the cytoplasm. The catalysed reaction is sn-glycerol 3-phosphate + NAD(+) = dihydroxyacetone phosphate + NADH + H(+). The enzyme catalyses sn-glycerol 3-phosphate + NADP(+) = dihydroxyacetone phosphate + NADPH + H(+). It participates in membrane lipid metabolism; glycerophospholipid metabolism. Catalyzes the reduction of the glycolytic intermediate dihydroxyacetone phosphate (DHAP) to sn-glycerol 3-phosphate (G3P), the key precursor for phospholipid synthesis. The chain is Glycerol-3-phosphate dehydrogenase [NAD(P)+] from Delftia acidovorans (strain DSM 14801 / SPH-1).